Consider the following 123-residue polypeptide: Fluoride-specific ion channel FluC (123 aa).

Helical transmembrane passes span 7-27 (LAVA…SGLL), 39-59 (MVNG…FWGF), 68-88 (FLGT…YETF), and 101-121 (LNVA…FLLA). Residues Gly-75 and Ser-78 each coordinate Na(+).

This sequence belongs to the fluoride channel Fluc/FEX (TC 1.A.43) family.

The protein resides in the cell membrane. It catalyses the reaction fluoride(in) = fluoride(out). Its activity is regulated as follows. Na(+) is not transported, but it plays an essential structural role and its presence is essential for fluoride channel function. Fluoride-specific ion channel. Important for reducing fluoride concentration in the cell, thus reducing its toxicity. This is Fluoride-specific ion channel FluC from Thermococcus gammatolerans (strain DSM 15229 / JCM 11827 / EJ3).